The chain runs to 629 residues: MEEGGYAFEVNNGRPTASEFGTTARISSPSLTMSSSFREGGGGGGSKGLTRRRSMKPSFDADNEFITLLHGSDPVKVELNRLENDVRDKDRELSESQAEIKALRLSERQREKAVEELTEELGKMSEKLKLTENLLDSKNLEIKKINEEKRASMAAQFAAEATLRRVHAAQKDDDMPPIEAILAPLEAELKLARHEIVKLQDDNRALDRLTKSKEAALLDAERTVQSALAKASMVDDLQNKNQELMKQIEICQEENRILDKLHRQKVAEVEKFTQTVRELEEAVLAGGTAANAVRDYQRKFQEMNEERRILDRELARAKVSASRVATVVANEWKDGSDKVMPVKQWLEERRFLQGEMQQLRDKLAIADRAAKSEAQLKEKFQLRLRVLEESLRGPSSSGNRSTPEGRSMSNGPSRRQSLGGADIIPKLTSNGFFSKRSPSSQFRSLNASTSTILKHAKGTSRSFDGGSRSLDRSKVLTNEPRSKFPLNQSSEGTSGGGSPNSTKQGDSEKAAGTNNDSVPGVLHDLLQKEVITLRKAANDKDQSLRDKDEAIEMLAKKVETLTKAMEVEAKKMRREVAAMEKEVSAMRVDNKGSDSRTRRHSTNSKGASTTAQLLSGRGSGRMGMTRSTQ.

Residues 1–54 (MEEGGYAFEVNNGRPTASEFGTTARISSPSLTMSSSFREGGGGGGSKGLTRRRS) are disordered. A compositionally biased stretch (polar residues) spans 13-33 (GRPTASEFGTTARISSPSLTM). The stretch at 75–375 (VKVELNRLEN…ADRAAKSEAQ (301 aa)) forms a coiled coil. The interval 257 to 493 (ILDKLHRQKV…FPLNQSSEGT (237 aa)) is required for targeting to microtubules. 3 disordered regions span residues 391–421 (LRGPSSSGNRSTPEGRSMSNGPSRRQSLGGA), 458–519 (GTSR…DSVP), and 578–629 (AMEK…RSTQ). Positions 393–416 (GPSSSGNRSTPEGRSMSNGPSRRQ) are enriched in polar residues. Positions 544–592 (LRDKDEAIEMLAKKVETLTKAMEVEAKKMRREVAAMEKEVSAMRVDNKG) form a coiled coil. Positions 578–596 (AMEKEVSAMRVDNKGSDSR) are enriched in basic and acidic residues. Over residues 603 to 613 (NSKGASTTAQL) the composition is skewed to polar residues.

Belongs to the MAP70 family.

It localises to the cytoplasm. It is found in the cytoskeleton. Its function is as follows. Plant-specific protein that interact with microtubules. This chain is Microtubule-associated protein 70-3 (MAP70.3), found in Arabidopsis thaliana (Mouse-ear cress).